Consider the following 239-residue polypeptide: tRNA (guanine-N(7)-)-methyltransferase (239 aa).

S-adenosyl-L-methionine-binding positions include glycine 64, 87–88 (EI), 120–121 (NA), and leucine 140. Aspartate 143 is an active-site residue. Position 218 to 220 (218 to 220 (SEE)) interacts with S-adenosyl-L-methionine.

Belongs to the class I-like SAM-binding methyltransferase superfamily. TrmB family.

The protein localises to the nucleus. The catalysed reaction is guanosine(46) in tRNA + S-adenosyl-L-methionine = N(7)-methylguanosine(46) in tRNA + S-adenosyl-L-homocysteine. It participates in tRNA modification; N(7)-methylguanine-tRNA biosynthesis. In terms of biological role, catalyzes the formation of N(7)-methylguanine at position 46 (m7G46) in tRNA. The sequence is that of tRNA (guanine-N(7)-)-methyltransferase from Culex quinquefasciatus (Southern house mosquito).